Reading from the N-terminus, the 499-residue chain is Phenylalanine--tRNA ligase alpha subunit (499 aa).

Residues Thr-333, 372–374 (QIE), and Tyr-412 contribute to the L-phenylalanine site. Mg(2+) is bound at residue Glu-414. Residue Phe-436 participates in L-phenylalanine binding.

The protein belongs to the class-II aminoacyl-tRNA synthetase family. Phe-tRNA synthetase alpha subunit type 2 subfamily. As to quaternary structure, tetramer of two alpha and two beta subunits. Requires Mg(2+) as cofactor.

It localises to the cytoplasm. The enzyme catalyses tRNA(Phe) + L-phenylalanine + ATP = L-phenylalanyl-tRNA(Phe) + AMP + diphosphate + H(+). The sequence is that of Phenylalanine--tRNA ligase alpha subunit from Thermoplasma acidophilum (strain ATCC 25905 / DSM 1728 / JCM 9062 / NBRC 15155 / AMRC-C165).